We begin with the raw amino-acid sequence, 260 residues long: UPF0246 protein SCO2297 (260 aa).

Belongs to the UPF0246 family.

This is UPF0246 protein SCO2297 from Streptomyces coelicolor (strain ATCC BAA-471 / A3(2) / M145).